We begin with the raw amino-acid sequence, 226 residues long: GTP-binding nuclear protein Ran-3 (226 aa).

Residues 14-178 (GYPSFKLILV…LYLARKLTGD (165 aa)) enclose the Small GTPase Ran-type domain. 25–32 (DGGTGKTT) is a binding site for GTP. The tract at residues 44 to 52 (KRYEPTIGV) is switch-I. GTP is bound by residues glycine 75, 129–132 (NKVD), and 157–159 (SAK). A switch-II region spans residues 75–91 (GQEKFGGLRDGYYIHGH).

It belongs to the small GTPase superfamily. Ran family. In terms of assembly, found in a nuclear export complex with RanGTP, exportin and pre-miRNA.

Its subcellular location is the nucleus. GTP-binding protein involved in nucleocytoplasmic transport. Required for the import of protein into the nucleus and also for RNA export. Involved in chromatin condensation and control of cell cycle. The chain is GTP-binding nuclear protein Ran-3 (RAN3) from Oryza sativa subsp. indica (Rice).